Consider the following 145-residue polypeptide: Transcription antitermination protein NusB (145 aa).

This sequence belongs to the NusB family.

Functionally, involved in transcription antitermination. Required for transcription of ribosomal RNA (rRNA) genes. Binds specifically to the boxA antiterminator sequence of the ribosomal RNA (rrn) operons. This chain is Transcription antitermination protein NusB, found in Thiobacillus denitrificans (strain ATCC 25259 / T1).